We begin with the raw amino-acid sequence, 104 residues long: NADH-quinone oxidoreductase subunit K (104 aa).

The next 3 membrane-spanning stretches (helical) occupy residues 4–24 (VPASAYLTLAIILFCIGLFGA), 31–51 (VIVLVCIELMLNAVNLNLVAF), and 67–87 (LFTMAVAAAEAAVGLAILIAL).

The protein belongs to the complex I subunit 4L family. In terms of assembly, NDH-1 is composed of 14 different subunits. Subunits NuoA, H, J, K, L, M, N constitute the membrane sector of the complex.

It localises to the cell membrane. It catalyses the reaction a quinone + NADH + 5 H(+)(in) = a quinol + NAD(+) + 4 H(+)(out). Functionally, NDH-1 shuttles electrons from NADH, via FMN and iron-sulfur (Fe-S) centers, to quinones in the respiratory chain. The immediate electron acceptor for the enzyme in this species is believed to be a menaquinone. Couples the redox reaction to proton translocation (for every two electrons transferred, four hydrogen ions are translocated across the cytoplasmic membrane), and thus conserves the redox energy in a proton gradient. This Bacillus cereus (strain AH187) protein is NADH-quinone oxidoreductase subunit K.